A 293-amino-acid polypeptide reads, in one-letter code: SAGA-associated factor 29 (293 aa).

The stretch at 3 to 88 (LVSADSRIAE…KALDKIAEIK (86 aa)) forms a coiled coil. The SGF29 C-terminal domain maps to 152–293 (GDYVARPGDK…VVACKEPKKK (142 aa)). Histone H3K4me3 N-terminus binding stretches follow at residues 194–196 (DID) and 240–243 (QTTC). The tract at residues 264–266 (FED) is histone H3K4me3 binding. K288 carries the N6-acetyllysine modification.

The protein belongs to the SGF29 family. Interacts with dimethylated and trimethylated 'Lys-4' of histone H3 (H3K4me2 and H3K4me3), with a preference for the trimethylated form (H3K4me3). Component of some SAGA-type complexes. Component of the ADA2A-containing complex (ATAC), composed of KAT14, KAT2A, TADA2L, TADA3L, ZZ3, MBIP, WDR5, YEATS2, CCDC101 and DR1. Interacts with (methylated) CGAS. Interacts with TADA3L, GCN5L2, SUPT3H and MYC.

It is found in the nucleus. Functionally, chromatin reader component of some histone acetyltransferase (HAT) SAGA-type complexes like the TFTC-HAT, ATAC or STAGA complexes. SGF29 specifically recognizes and binds methylated 'Lys-4' of histone H3 (H3K4me), with a preference for trimethylated form (H3K4me3). In the SAGA-type complexes, SGF29 is required to recruit complexes to H3K4me. Involved in the response to endoplasmic reticulum (ER) stress by recruiting the SAGA complex to H3K4me, thereby promoting histone H3 acetylation and cell survival. Also binds non-histone proteins that are methylated on Lys residues: specifically recognizes and binds CGAS monomethylated on 'Lys-506'. This Homo sapiens (Human) protein is SAGA-associated factor 29.